Consider the following 1147-residue polypeptide: Nitric oxide synthase, inducible (1147 aa).

Residues 22 to 51 are disordered; sequence KDINNNVEKTPGAIPSPTTQDDPKSHKHQN. The DINNN-motif; mediates interaction with SPSB1, SPSB2 and SPSB4 signature appears at 23–27; sequence DINNN. Zn(2+) is bound by residues Cys107 and Cys112. Residue Ser115 participates in (6R)-L-erythro-5,6,7,8-tetrahydrobiopterin binding. Cys197 contacts heme b. The L-arginine site is built by Gln260, Trp369, Tyr370, and Glu374. Arg378, Ile459, Trp460, and Phe473 together coordinate (6R)-L-erythro-5,6,7,8-tetrahydrobiopterin. Tyr488 provides a ligand contact to heme b. Residues 512-532 are calmodulin-binding; sequence FTVLVKAVFFASVLMRKVMAS. The Flavodoxin-like domain occupies 536–674; sequence ATVLFATETG…AFRSWAVQTF (139 aa). Thr542, Glu543, Thr544, Lys546, and Ser547 together coordinate FMN. Thr564 carries the post-translational modification Phosphothreonine. The residue at position 572 (Tyr572) is a Phosphotyrosine. The FMN site is built by Ser588, Thr589, Ser625, Cys632, Glu658, and Gln662. Residues 727–967 form the FAD-binding FR-type domain; sequence KNVFTMRLKS…VRSVSGFQLP (241 aa). Arg747 serves as a coordination point for NADP(+). FAD is bound by residues His769, Arg903, Tyr905, Ser906, Thr921, and Ala923. Thr926 serves as a coordination point for NADP(+). The FAD site is built by Tyr927, Val940, Cys941, and Ser942. Residues Thr981, Arg1014, Ser1043, Arg1044, Lys1050, Tyr1052, Gln1054, and Asp1087 each contribute to the NADP(+) site.

It belongs to the NOS family. In terms of assembly, homodimer. Interacts with NHERF1. Interacts with GAPDH; induced by oxidatively-modified low-densitity lipoprotein (LDL(ox)). Interacts with S100A8 and S100A9 to form the iNOS-S100A8/9 transnitrosylase complex. Interacts with SPSB1, SPSB2 and SPSB4. Interacts with ELOC and CUL5 in the presence of SPSB1 or SPSB2 or SPSB4. Forms a complex with ASL, ASS1 and HSP90AA1; the complex regulates cell-autonomous L-arginine synthesis and citrulline recycling while channeling extracellular L-arginine to nitric oxide synthesis pathway. Heme b is required as a cofactor. Requires FAD as cofactor. FMN serves as cofactor. It depends on (6R)-L-erythro-5,6,7,8-tetrahydrobiopterin as a cofactor. In terms of processing, polyubiquitinated; mediated by SPSB1, SPSB2 and SPSB4, leading to proteasomal degradation. As to expression, in normal kidney, expressed primarily in the medullary thick ascending limb, with minor amounts in the medullary collecting duct and vasa recta bundle.

The protein localises to the cytoplasm. It is found in the cytosol. It carries out the reaction 2 L-arginine + 3 NADPH + 4 O2 + H(+) = 2 L-citrulline + 2 nitric oxide + 3 NADP(+) + 4 H2O. With respect to regulation, not stimulated by calcium/calmodulin. Aspirin inhibits expression and function of this enzyme and effects may be exerted at the level of translational/post-translational modification and directly on the catalytic activity. Its function is as follows. Produces nitric oxide (NO) which is a messenger molecule with diverse functions throughout the body. In macrophages, NO mediates tumoricidal and bactericidal actions. Also has nitrosylase activity and mediates cysteine S-nitrosylation of cytoplasmic target proteins such PTGS2/COX2. As component of the iNOS-S100A8/9 transnitrosylase complex involved in the selective inflammatory stimulus-dependent S-nitrosylation of GAPDH implicated in regulation of the GAIT complex activity and probably multiple targets including ANXA5, EZR, MSN and VIM. Involved in inflammation, enhances the synthesis of pro-inflammatory mediators such as IL6 and IL8. This chain is Nitric oxide synthase, inducible (Nos2), found in Rattus norvegicus (Rat).